Here is a 276-residue protein sequence, read N- to C-terminus: S-adenosylmethionine decarboxylase proenzyme (276 aa).

Ser126 functions as the Schiff-base intermediate with substrate; via pyruvic acid in the catalytic mechanism. The residue at position 126 (Ser126) is a Pyruvic acid (Ser); by autocatalysis. Catalysis depends on His131, which acts as the Proton acceptor; for processing activity. The Proton donor; for catalytic activity role is filled by Cys154.

The protein belongs to the prokaryotic AdoMetDC family. Type 2 subfamily. As to quaternary structure, heterooctamer of four alpha and four beta chains arranged as a tetramer of alpha/beta heterodimers. It depends on pyruvate as a cofactor. In terms of processing, is synthesized initially as an inactive proenzyme. Formation of the active enzyme involves a self-maturation process in which the active site pyruvoyl group is generated from an internal serine residue via an autocatalytic post-translational modification. Two non-identical subunits are generated from the proenzyme in this reaction, and the pyruvate is formed at the N-terminus of the alpha chain, which is derived from the carboxyl end of the proenzyme. The post-translation cleavage follows an unusual pathway, termed non-hydrolytic serinolysis, in which the side chain hydroxyl group of the serine supplies its oxygen atom to form the C-terminus of the beta chain, while the remainder of the serine residue undergoes an oxidative deamination to produce ammonia and the pyruvoyl group blocking the N-terminus of the alpha chain.

The enzyme catalyses S-adenosyl-L-methionine + H(+) = S-adenosyl 3-(methylsulfanyl)propylamine + CO2. It functions in the pathway amine and polyamine biosynthesis; S-adenosylmethioninamine biosynthesis; S-adenosylmethioninamine from S-adenosyl-L-methionine: step 1/1. Its function is as follows. Catalyzes the decarboxylation of S-adenosylmethionine to S-adenosylmethioninamine (dcAdoMet), the propylamine donor required for the synthesis of the polyamines spermine and spermidine from the diamine putrescine. This chain is S-adenosylmethionine decarboxylase proenzyme, found in Alcanivorax borkumensis (strain ATCC 700651 / DSM 11573 / NCIMB 13689 / SK2).